The chain runs to 200 residues: Imidazole glycerol phosphate synthase subunit HisH (200 aa).

Residues D3–P200 form the Glutamine amidotransferase type-1 domain. Catalysis depends on C78, which acts as the Nucleophile. Catalysis depends on residues H179 and E181.

As to quaternary structure, heterodimer of HisH and HisF.

The protein resides in the cytoplasm. It carries out the reaction 5-[(5-phospho-1-deoxy-D-ribulos-1-ylimino)methylamino]-1-(5-phospho-beta-D-ribosyl)imidazole-4-carboxamide + L-glutamine = D-erythro-1-(imidazol-4-yl)glycerol 3-phosphate + 5-amino-1-(5-phospho-beta-D-ribosyl)imidazole-4-carboxamide + L-glutamate + H(+). It catalyses the reaction L-glutamine + H2O = L-glutamate + NH4(+). Its pathway is amino-acid biosynthesis; L-histidine biosynthesis; L-histidine from 5-phospho-alpha-D-ribose 1-diphosphate: step 5/9. Functionally, IGPS catalyzes the conversion of PRFAR and glutamine to IGP, AICAR and glutamate. The HisH subunit catalyzes the hydrolysis of glutamine to glutamate and ammonia as part of the synthesis of IGP and AICAR. The resulting ammonia molecule is channeled to the active site of HisF. The sequence is that of Imidazole glycerol phosphate synthase subunit HisH from Xanthomonas campestris pv. campestris (strain 8004).